The chain runs to 146 residues: Hemoglobin subunit beta (146 aa).

N-acetylvaline is present on Val1. The 145-residue stretch at 2–146 (HLSGEEKTAL…VANALAHKYH (145 aa)) folds into the Globin domain. Residue Ser44 is modified to Phosphoserine. Position 59 is an N6-acetyllysine (Lys59). His63 is a binding site for heme b. Lys82 bears the N6-acetyllysine mark. His92 provides a ligand contact to heme b. S-nitrosocysteine is present on Cys93. An N6-acetyllysine modification is found at Lys144.

It belongs to the globin family. As to quaternary structure, heterotetramer of two alpha chains and two beta chains. Red blood cells.

Functionally, involved in oxygen transport from the lung to the various peripheral tissues. This chain is Hemoglobin subunit beta, found in Tamiasciurus hudsonicus (American red squirrel).